Reading from the N-terminus, the 110-residue chain is ORC1-type DNA replication protein 3 (110 aa).

8-12 (SGKSL) is an ATP binding site.

Belongs to the CDC6/cdc18 family.

In terms of biological role, involved in regulation of DNA replication. The protein is ORC1-type DNA replication protein 3 (orc3) of Halobacterium salinarum (strain ATCC 700922 / JCM 11081 / NRC-1) (Halobacterium halobium).